We begin with the raw amino-acid sequence, 518 residues long: Bifunctional purine biosynthesis protein PurH (518 aa).

Positions methionine 1–cysteine 144 constitute an MGS-like domain.

This sequence belongs to the PurH family.

It catalyses the reaction (6R)-10-formyltetrahydrofolate + 5-amino-1-(5-phospho-beta-D-ribosyl)imidazole-4-carboxamide = 5-formamido-1-(5-phospho-D-ribosyl)imidazole-4-carboxamide + (6S)-5,6,7,8-tetrahydrofolate. The enzyme catalyses IMP + H2O = 5-formamido-1-(5-phospho-D-ribosyl)imidazole-4-carboxamide. The protein operates within purine metabolism; IMP biosynthesis via de novo pathway; 5-formamido-1-(5-phospho-D-ribosyl)imidazole-4-carboxamide from 5-amino-1-(5-phospho-D-ribosyl)imidazole-4-carboxamide (10-formyl THF route): step 1/1. It functions in the pathway purine metabolism; IMP biosynthesis via de novo pathway; IMP from 5-formamido-1-(5-phospho-D-ribosyl)imidazole-4-carboxamide: step 1/1. This Lactococcus lactis subsp. cremoris (strain MG1363) protein is Bifunctional purine biosynthesis protein PurH.